A 464-amino-acid polypeptide reads, in one-letter code: ATP-dependent protease ATPase subunit HslU (464 aa).

ATP is bound by residues V18, 60–65, D277, E342, and R414; that span reads GVGKTE.

Belongs to the ClpX chaperone family. HslU subfamily. A double ring-shaped homohexamer of HslV is capped on each side by a ring-shaped HslU homohexamer. The assembly of the HslU/HslV complex is dependent on binding of ATP.

The protein localises to the cytoplasm. ATPase subunit of a proteasome-like degradation complex; this subunit has chaperone activity. The binding of ATP and its subsequent hydrolysis by HslU are essential for unfolding of protein substrates subsequently hydrolyzed by HslV. HslU recognizes the N-terminal part of its protein substrates and unfolds these before they are guided to HslV for hydrolysis. This is ATP-dependent protease ATPase subunit HslU from Lactobacillus leichmannii.